We begin with the raw amino-acid sequence, 377 residues long: N-acetyldiaminopimelate deacetylase (377 aa).

Residue Asp70 is part of the active site. Glu129 functions as the Proton acceptor in the catalytic mechanism.

It belongs to the peptidase M20A family. N-acetyldiaminopimelate deacetylase subfamily.

It catalyses the reaction N-acetyl-(2S,6S)-2,6-diaminopimelate + H2O = (2S,6S)-2,6-diaminopimelate + acetate. It participates in amino-acid biosynthesis; L-lysine biosynthesis via DAP pathway; LL-2,6-diaminopimelate from (S)-tetrahydrodipicolinate (acetylase route): step 3/3. Its function is as follows. Catalyzes the conversion of N-acetyl-diaminopimelate to diaminopimelate and acetate. This Streptococcus thermophilus (strain CNRZ 1066) protein is N-acetyldiaminopimelate deacetylase.